Reading from the N-terminus, the 489-residue chain is Probable serine protease EDA2 (489 aa).

The signal sequence occupies residues 1-25 (MSLEFGFILINIFTAIVSFSTLSHA). N-linked (GlcNAc...) asparagine glycans are attached at residues Asn35, Asn51, and Asn162. The active-site Charge relay system is the Ser178. N-linked (GlcNAc...) asparagine glycosylation is found at Asn253, Asn293, Asn365, and Asn406. The active-site Charge relay system is Asp410. Asn419 carries N-linked (GlcNAc...) asparagine glycosylation. Catalysis depends on His436, which acts as the Charge relay system. N-linked (GlcNAc...) asparagine glycosylation occurs at Asn456.

It belongs to the peptidase S28 family.

The protein resides in the secreted. Functionally, may be involved in a proteolytic pathway controlling the nuclear division phase of megagametogenesis. The protein is Probable serine protease EDA2 (EDA2) of Arabidopsis thaliana (Mouse-ear cress).